The sequence spans 557 residues: Membrane protein insertase YidC (557 aa).

The helical transmembrane segment at Asn-3–Trp-23 threads the bilayer. A disordered region spans residues Ala-34 to Ser-60. The next 4 helical transmembrane spans lie at Val-366–Tyr-386, Leu-436–Leu-456, Tyr-480–Ala-500, and Pro-514–Val-534.

It belongs to the OXA1/ALB3/YidC family. Type 1 subfamily. Interacts with the Sec translocase complex via SecD. Specifically interacts with transmembrane segments of nascent integral membrane proteins during membrane integration.

The protein resides in the cell inner membrane. In terms of biological role, required for the insertion and/or proper folding and/or complex formation of integral membrane proteins into the membrane. Involved in integration of membrane proteins that insert both dependently and independently of the Sec translocase complex, as well as at least some lipoproteins. Aids folding of multispanning membrane proteins. This is Membrane protein insertase YidC from Thioalkalivibrio sulfidiphilus (strain HL-EbGR7).